The primary structure comprises 432 residues: Tyrosine--tRNA ligase (432 aa).

Tyr-35 contributes to the L-tyrosine binding site. The short motif at 40-49 (PTAGSLHVGH) is the 'HIGH' region element. L-tyrosine contacts are provided by Tyr-175 and Gln-179. Residues 239 to 243 (KFGKT) carry the 'KMSKS' region motif. Position 242 (Lys-242) interacts with ATP. The region spanning 365 to 422 (PPLVDLFASTGLVPSKSAARRTIQEGGAYLNNAKVTDIEARVSEADLLHGRYLVLRRG) is the S4 RNA-binding domain.

The protein belongs to the class-I aminoacyl-tRNA synthetase family. TyrS type 1 subfamily. In terms of assembly, homodimer.

Its subcellular location is the cytoplasm. The enzyme catalyses tRNA(Tyr) + L-tyrosine + ATP = L-tyrosyl-tRNA(Tyr) + AMP + diphosphate + H(+). Its function is as follows. Catalyzes the attachment of tyrosine to tRNA(Tyr) in a two-step reaction: tyrosine is first activated by ATP to form Tyr-AMP and then transferred to the acceptor end of tRNA(Tyr). The polypeptide is Tyrosine--tRNA ligase (Thermobifida fusca (strain YX)).